The chain runs to 196 residues: Cell division protein SepF (196 aa).

The segment at 16–81 (EDDEEFNEPA…KRAGSTFTKP (66 aa)) is disordered. Polar residues predominate over residues 56–69 (RPAQSTSKAQTQTA).

This sequence belongs to the SepF family. Homodimer. Interacts with FtsZ.

It is found in the cytoplasm. Its function is as follows. Cell division protein that is part of the divisome complex and is recruited early to the Z-ring. Probably stimulates Z-ring formation, perhaps through the cross-linking of FtsZ protofilaments. Its function overlaps with FtsA. The polypeptide is Cell division protein SepF (Lactococcus lactis subsp. lactis (strain IL1403) (Streptococcus lactis)).